The sequence spans 528 residues: Phosphoenolpyruvate carboxykinase (ATP) (528 aa).

Substrate-binding residues include Arg56, Tyr192, and Lys198. ATP-binding positions include Lys198, His217, and Gly233–Thr241. Residues Lys198 and His217 each coordinate Mn(2+). Asp254 serves as a coordination point for Mn(2+). 3 residues coordinate ATP: Glu282, Arg319, and Thr444. Arg319 serves as a coordination point for substrate.

It belongs to the phosphoenolpyruvate carboxykinase (ATP) family. Requires Mn(2+) as cofactor.

The protein resides in the cytoplasm. The catalysed reaction is oxaloacetate + ATP = phosphoenolpyruvate + ADP + CO2. The protein operates within carbohydrate biosynthesis; gluconeogenesis. Functionally, involved in the gluconeogenesis. Catalyzes the conversion of oxaloacetate (OAA) to phosphoenolpyruvate (PEP) through direct phosphoryl transfer between the nucleoside triphosphate and OAA. The polypeptide is Phosphoenolpyruvate carboxykinase (ATP) (Bacillus cereus (strain AH187)).